Consider the following 86-residue polypeptide: MKNASLKLPLLIFILVITSNLGAEARKLTGVADVIVEGEAASPQYGIIDENDTLNKSPSCKRDIDCTFQCRRGGFCNLILQKCECL.

Residues 1 to 25 (MKNASLKLPLLIFILVITSNLGAEA) form the signal peptide. 3 disulfides stabilise this stretch: Cys60–Cys76, Cys66–Cys83, and Cys70–Cys85.

The protein belongs to the DEFL family.

Its subcellular location is the secreted. This chain is Defensin-like protein 259, found in Arabidopsis thaliana (Mouse-ear cress).